The chain runs to 184 residues: MPVKFDATTIIAISHNGENAMAGDGQVTMGEKFIMKGTARKVRRIYDGKVIVGFAGSVADAFNLEEKFEKKLSEYSGNLQRASVELAKIWRGDQQLQKLEAMLIVMDEKEMYLVSGSGEVIAPDDGILAIGSGGNFALAAAKALKKHATQVSAKEMAKTAINVAGDIDIFTNHNVIALDFKEED.

Thr8 is an active-site residue. Na(+) is bound by residues Gly165, Asp168, and Thr171.

It belongs to the peptidase T1B family. HslV subfamily. In terms of assembly, a double ring-shaped homohexamer of HslV is capped on each side by a ring-shaped HslU homohexamer. The assembly of the HslU/HslV complex is dependent on binding of ATP.

It is found in the cytoplasm. It carries out the reaction ATP-dependent cleavage of peptide bonds with broad specificity.. With respect to regulation, allosterically activated by HslU binding. Protease subunit of a proteasome-like degradation complex believed to be a general protein degrading machinery. The protein is ATP-dependent protease subunit HslV of Pediococcus pentosaceus (strain ATCC 25745 / CCUG 21536 / LMG 10740 / 183-1w).